Reading from the N-terminus, the 303-residue chain is ATP synthase gamma chain (303 aa).

Belongs to the ATPase gamma chain family. In terms of assembly, F-type ATPases have 2 components, CF(1) - the catalytic core - and CF(0) - the membrane proton channel. CF(1) has five subunits: alpha(3), beta(3), gamma(1), delta(1), epsilon(1). CF(0) has three main subunits: a, b and c.

Its subcellular location is the cell membrane. Produces ATP from ADP in the presence of a proton gradient across the membrane. The gamma chain is believed to be important in regulating ATPase activity and the flow of protons through the CF(0) complex. This is ATP synthase gamma chain from Nocardioides sp. (strain ATCC BAA-499 / JS614).